Reading from the N-terminus, the 127-residue chain is Fluoride-specific ion channel FluC (127 aa).

The next 4 helical transmembrane spans lie at 7–27 (VYVA…VAWV), 38–58 (GTLA…VYVV), 70–90 (LIMV…LEAW), and 102–122 (LAYI…GIAL). Gly-77 and Thr-80 together coordinate Na(+).

Belongs to the fluoride channel Fluc/FEX (TC 1.A.43) family.

The protein resides in the cell inner membrane. It catalyses the reaction fluoride(in) = fluoride(out). With respect to regulation, na(+) is not transported, but it plays an essential structural role and its presence is essential for fluoride channel function. In terms of biological role, fluoride-specific ion channel. Important for reducing fluoride concentration in the cell, thus reducing its toxicity. This is Fluoride-specific ion channel FluC from Hahella chejuensis (strain KCTC 2396).